A 311-amino-acid chain; its full sequence is Olfactory receptor 5L1 (311 aa).

The Extracellular portion of the chain corresponds to 1–25 (MGKENCTTVAEFILLGLSDVPELRV). Asparagine 5 is a glycosylation site (N-linked (GlcNAc...) asparagine). Residues 26-46 (CLFLLFLLIYGVTLLANLGMI) form a helical membrane-spanning segment. The Cytoplasmic segment spans residues 47-54 (ALIQVSSR). The helical transmembrane segment at 55 to 75 (LHTPMYFFLSHLSSVDFCYSS) threads the bilayer. Over 76–99 (IIVPKMLANIFNKDKAISFLGCMV) the chain is Extracellular. A disulfide bridge connects residues cysteine 97 and cysteine 189. The helical transmembrane segment at 100–120 (QFYLFCTCVVTEVFLLAVMAY) threads the bilayer. At 121-139 (DRFVAICNPLLYTVTMSWK) the chain is on the cytoplasmic side. Residues 140–160 (VRVELASCCYFCGTVCSLIHL) form a helical membrane-spanning segment. Over 161-196 (CLALRIPFYRSNVINHFFCDLPPVLSLACSDITVNE) the chain is Extracellular. N-linked (GlcNAc...) asparagine glycosylation occurs at asparagine 195. The helical transmembrane segment at 197-217 (TLLFLVATLNESVTIMIILTS) threads the bilayer. Residues 218 to 237 (YLLILTTILKMGSAEGRHKA) lie on the Cytoplasmic side of the membrane. The helical transmembrane segment at 238–258 (FSTCASHLTAITVFHGTVLSI) threads the bilayer. Topologically, residues 259–271 (YCRPSSGNSGDAD) are extracellular. Residues 272-292 (KVATVFYTVVIPMLNSVIYSL) form a helical membrane-spanning segment. Over 293–311 (RNKDVKEALRKVMGSKIHS) the chain is Cytoplasmic.

It belongs to the G-protein coupled receptor 1 family.

It localises to the cell membrane. Its function is as follows. Odorant receptor. The polypeptide is Olfactory receptor 5L1 (OR5L1) (Homo sapiens (Human)).